Here is a 186-residue protein sequence, read N- to C-terminus: GTP cyclohydrolase 1 1 (186 aa).

It belongs to the GTP cyclohydrolase I family. In terms of assembly, homomer.

The catalysed reaction is GTP + H2O = 7,8-dihydroneopterin 3'-triphosphate + formate + H(+). It functions in the pathway cofactor biosynthesis; 7,8-dihydroneopterin triphosphate biosynthesis; 7,8-dihydroneopterin triphosphate from GTP: step 1/1. This is GTP cyclohydrolase 1 1 (folE1) from Pseudomonas aeruginosa (strain ATCC 15692 / DSM 22644 / CIP 104116 / JCM 14847 / LMG 12228 / 1C / PRS 101 / PAO1).